We begin with the raw amino-acid sequence, 489 residues long: CDK5RAP3 protein homolog (489 aa).

It belongs to the CDK5RAP3 family.

Substrate adapter of E3 ligase complexes mediating ufmylation, the covalent attachment of the ubiquitin-like modifier UFM1 to substrate proteins, and which is involved in various processes, such as ribosome recycling and reticulophagy (also called ER-phagy). This chain is CDK5RAP3 protein homolog, found in Caenorhabditis elegans.